Reading from the N-terminus, the 441-residue chain is Heat shock factor protein 4 (441 aa).

A DNA-binding region spans residues 17–121 (NVPAFLTKLW…EHLLEHIKRK (105 aa)). A hydrophobic repeat HR-A/B region spans residues 130–205 (TKVRQEDLSK…QMQSNSPSTV (76 aa)).

The protein belongs to the HSF family. Predominantly expressed in the eye.

It is found in the nucleus. In terms of biological role, heat-shock transcription factor that specifically binds heat shock promoter elements (HSE). Required for denucleation and organelle rupture and degradation that occur during eye lens terminal differentiation, when fiber cells that compose the lens degrade all membrane-bound organelles in order to provide lens with transparency to allow the passage of light. In this process, may regulate denucleation of lens fiber cells in part by activating dnase1l1l and dnase2b transcription. May be involved in DNA repair through the transcriptional regulation of rad51. May up-regulate TP53 protein in lens fiber cells, possibly through protein stabilization. In the eye lens, controls the expression of alpha-crystallin B chain/CRYAB and consequently may be involved in the regulation of lysosomal acidification. The protein is Heat shock factor protein 4 of Danio rerio (Zebrafish).